The chain runs to 360 residues: Inward rectifier potassium channel 13 (360 aa).

The Cytoplasmic segment spans residues 1–50 (MDGSHCKVIAPLLTERHQRMVTKDGHSTLQMDGAQTGLAYLRDAWGILMD). A helical transmembrane segment spans residues 51–77 (MRWRWMMLVFSASFVIHWLVFAVLWYI). The Extracellular segment spans residues 78–105 (LAEMNGDLGLDHDAPPENHTICVKYITS). Positions 106 to 122 (FTAAFSFSLETQLTIGY) form an intramembrane region, helical; Pore-forming. Residues 119–124 (TIGYGT) carry the Selectivity filter motif. Residues 123 to 131 (GTMFPSGDC) lie on the Extracellular side of the membrane. A helical membrane pass occupies residues 132–157 (PSAIALLAIQMLLGLMLEAFITGAFV). The Cytoplasmic segment spans residues 158–360 (AKIARPKNRA…FQISETGLTE (203 aa)). The residue at position 287 (serine 287) is a Phosphoserine.

Belongs to the inward rectifier-type potassium channel (TC 1.A.2.1) family. As to quaternary structure, homotetramer. Interacts with RAB28; the interaction may facilitate cone outer segments phagocytosis. Post-translationally, phosphorylation at Ser-287 by PKA increases them.

It localises to the membrane. It is found in the cell membrane. It catalyses the reaction K(+)(in) = K(+)(out). Inhibited by Ba(2+) and Cs(+), although sensitivity to those inhibitors is much lower than in other Kir channels. Functionally, inward rectifier potassium channels are characterized by a greater tendency to allow potassium to flow into the cell rather than out of it. Their voltage dependence is regulated by the concentration of extracellular potassium; as external potassium is raised, the voltage range of the channel opening shifts to more positive voltages. The inward rectification is mainly due to the blockage of outward current by internal magnesium. KCNJ13 has a very low single channel conductance, low sensitivity to block by external barium and cesium, and no dependence of its inward rectification properties on the internal blocking particle magnesium. In Bos taurus (Bovine), this protein is Inward rectifier potassium channel 13 (KCNJ13).